Consider the following 432-residue polypeptide: MTAYFSTPEKIQASAERIAAIIDAKPNGYFYPPAYFGKPGFLNFTPNVEVAQRAALKKNLPGILATFACGTVQREAGIELQKQTSYGNWNGPGFSGFSTGQQDGSGDLIFQLLVAKAMPPGECQPNAAGGLNRNFDATAFKNSSHPEIPPFATITDIPSVWNQQERSLAQWDGSVKMAFWRNIAAQLPIVGDPSKIDLVNTGVVANFLDGLPPAAYPFDVDMASAVRGEALFKDNCAVCHKPHNDTIYQFRDIGTDMNRAAVLNDAAFHLFAAGFQASCHDQDFLYRSPTGEEVRPCRMAGEDVITARTTPAVQGYVAEVLDGVWARAPYLHNGSIPTLYHLLVPASRPEQFLRGAIQYDTAKVGYVLDPAVTGLVADTSPTLTIYDRRKDGHAGTGHDRNLVVDGKLRRLDWSGPQYADALKDLIEYLKTR.

In terms of domain architecture, Cytochrome c spans Ala-223–Arg-432. Residues Cys-236, Cys-239, and His-240 each contribute to the heme c site.

This is an uncharacterized protein from Sinorhizobium fredii (strain NBRC 101917 / NGR234).